We begin with the raw amino-acid sequence, 798 residues long: General transcription and DNA repair factor IIH helicase/translocase subunit XPB (798 aa).

2 disordered regions span residues methionine 1 to asparagine 62 and proline 235 to glycine 254. The short motif at lysine 6–arginine 22 is the Nuclear localization signal element. Residues aspartate 10 to aspartate 25 are compositionally biased toward basic and acidic residues. Residues aspartate 33–glutamate 42 are compositionally biased toward acidic residues. The 162-residue stretch at methionine 343–leucine 504 folds into the Helicase ATP-binding domain. Residue alanine 360–valine 367 participates in ATP binding. The DEVH box signature appears at aspartate 457–histidine 460. One can recognise a Helicase C-terminal domain in the interval arginine 558 to aspartate 713. Positions leucine 746–glycine 765 are disordered.

Belongs to the helicase family. RAD25/XPB subfamily. Component of the 7-subunit TFIIH core complex composed of haywire/XPB/ERCC3, XPD/ERCC2, GTF2H1, GTF2H2, GTF2H3, GTF2H4 and GTF2H5, which is active in NER. The core complex associates with the 3-subunit CDK-activating kinase (CAK) module composed of CCNH/cyclin H, CDK7 and MNAT1 to form the 10-subunit holoenzyme (holo-TFIIH) active in transcription. Interacts with PUF60. Interacts with ATF7IP. Interacts with Epstein-Barr virus EBNA2.

The protein localises to the nucleus. It catalyses the reaction Couples ATP hydrolysis with the unwinding of duplex DNA by translocating in the 3'-5' direction.. It carries out the reaction ATP + H2O = ADP + phosphate + H(+). In terms of biological role, ATP-dependent 3'-5' DNA helicase/translocase; binds dsDNA rather than ssDNA, unzipping it in a translocase rather than classical helicase activity. Component of the general transcription and DNA repair factor IIH (TFIIH) core complex. When complexed to CDK-activating kinase (CAK), involved in RNA transcription by RNA polymerase II. The ATPase activity of XPB/ERCC3, but not its helicase activity, is required for DNA opening; it may wrap around the damaged DNA wedging it open, causing localized melting and twisting that allows XPD/ERCC2 helicase to anchor. The ATP-dependent helicase activity of XPB/ERCC3 may be required for promoter escape. Also involved in transcription-coupled nucleotide excision repair (NER) of damaged DNA. In NER, TFIIH acts by opening DNA around the lesion to allow the excision of the damaged oligonucleotide and its replacement by a new DNA fragment. The structure of the TFIIH transcription complex differs from the NER-TFIIH complex; large movements by XPD/ERCC2 and XPB/ERCC3 are stabilized by XPA. The polypeptide is General transcription and DNA repair factor IIH helicase/translocase subunit XPB (hay) (Drosophila melanogaster (Fruit fly)).